We begin with the raw amino-acid sequence, 248 residues long: MSFPYFISPEQAMRERSELARKGIARAKSVVALAYAGGVLFVAENPSRSLQKISELYDRVGFAAAGKFNEFDNLRRGGIQFADTRGYAYDRRDVTGRQLANVYAQTLGTIFTEQAKPYEVELCVAEVAHYGETKRPELYRITYDGSIADEPHFVVMGGTTEPIANALKESYAENASLTDALRIAVAALRAGSADTSGGDQPTLGVASLEVAVLDANRPRRAFRRITGSALQALLVDQESPQSDGESSG.

Belongs to the peptidase T1A family. The 20S proteasome core is composed of 14 alpha and 14 beta subunits that assemble into four stacked heptameric rings, resulting in a barrel-shaped structure. The two inner rings, each composed of seven catalytic beta subunits, are sandwiched by two outer rings, each composed of seven alpha subunits. The catalytic chamber with the active sites is on the inside of the barrel. Has a gated structure, the ends of the cylinder being occluded by the N-termini of the alpha-subunits. Is capped by the proteasome-associated ATPase, ARC.

The protein localises to the cytoplasm. The protein operates within protein degradation; proteasomal Pup-dependent pathway. With respect to regulation, the formation of the proteasomal ATPase ARC-20S proteasome complex, likely via the docking of the C-termini of ARC into the intersubunit pockets in the alpha-rings, may trigger opening of the gate for substrate entry. Interconversion between the open-gate and close-gate conformations leads to a dynamic regulation of the 20S proteasome proteolysis activity. In terms of biological role, component of the proteasome core, a large protease complex with broad specificity involved in protein degradation. In Mycobacterium tuberculosis (strain ATCC 25177 / H37Ra), this protein is Proteasome subunit alpha.